A 648-amino-acid chain; its full sequence is Bifunctional protein TilS/HprT (648 aa).

Position 29-34 (29-34 (SGGPDS)) interacts with ATP. Aspartate 627 provides a ligand contact to Mg(2+).

In the N-terminal section; belongs to the tRNA(Ile)-lysidine synthase family. The protein in the C-terminal section; belongs to the purine/pyrimidine phosphoribosyltransferase family. It depends on Mg(2+) as a cofactor.

The protein resides in the cytoplasm. It carries out the reaction IMP + diphosphate = hypoxanthine + 5-phospho-alpha-D-ribose 1-diphosphate. The catalysed reaction is GMP + diphosphate = guanine + 5-phospho-alpha-D-ribose 1-diphosphate. The enzyme catalyses cytidine(34) in tRNA(Ile2) + L-lysine + ATP = lysidine(34) in tRNA(Ile2) + AMP + diphosphate + H(+). In terms of biological role, ligates lysine onto the cytidine present at position 34 of the AUA codon-specific tRNA(Ile) that contains the anticodon CAU, in an ATP-dependent manner. Cytidine is converted to lysidine, thus changing the amino acid specificity of the tRNA from methionine to isoleucine. The chain is Bifunctional protein TilS/HprT (tilS/hprT) from Listeria innocua serovar 6a (strain ATCC BAA-680 / CLIP 11262).